Reading from the N-terminus, the 21-residue chain is Hemocyanin subunit 6 (21 aa).

The protein belongs to the tyrosinase family. Hemocyanin subfamily. In terms of tissue distribution, hemolymph.

The protein localises to the secreted. It is found in the extracellular space. In terms of biological role, hemocyanins are copper-containing oxygen carriers occurring freely dissolved in the hemolymph of many mollusks and arthropods. This is Hemocyanin subunit 6 from Maja squinado (Mediterranean spider crab).